Consider the following 416-residue polypeptide: Gamma-glutamyl phosphate reductase (416 aa).

It belongs to the gamma-glutamyl phosphate reductase family.

It is found in the cytoplasm. It carries out the reaction L-glutamate 5-semialdehyde + phosphate + NADP(+) = L-glutamyl 5-phosphate + NADPH + H(+). The protein operates within amino-acid biosynthesis; L-proline biosynthesis; L-glutamate 5-semialdehyde from L-glutamate: step 2/2. Its function is as follows. Catalyzes the NADPH-dependent reduction of L-glutamate 5-phosphate into L-glutamate 5-semialdehyde and phosphate. The product spontaneously undergoes cyclization to form 1-pyrroline-5-carboxylate. The protein is Gamma-glutamyl phosphate reductase of Vibrio parahaemolyticus serotype O3:K6 (strain RIMD 2210633).